Consider the following 255-residue polypeptide: Hydroxyacylglutathione hydrolase (255 aa).

Zn(2+) contacts are provided by His-56, His-58, Asp-60, His-61, His-114, Asp-133, and His-171.

Belongs to the metallo-beta-lactamase superfamily. Glyoxalase II family. In terms of assembly, monomer. Zn(2+) serves as cofactor.

It catalyses the reaction an S-(2-hydroxyacyl)glutathione + H2O = a 2-hydroxy carboxylate + glutathione + H(+). It functions in the pathway secondary metabolite metabolism; methylglyoxal degradation; (R)-lactate from methylglyoxal: step 2/2. Thiolesterase that catalyzes the hydrolysis of S-D-lactoyl-glutathione to form glutathione and D-lactic acid. In Rhodopseudomonas palustris (strain BisA53), this protein is Hydroxyacylglutathione hydrolase.